The chain runs to 425 residues: Serine--tRNA ligase (425 aa).

The disordered stretch occupies residues 108 to 134 (YPNLPSEACPDGRSEDDNKEVRRWGDP). Residues 117 to 134 (PDGRSEDDNKEVRRWGDP) show a composition bias toward basic and acidic residues. Residue 233-235 (TAE) coordinates L-serine. Residue 264–266 (RRE) participates in ATP binding. Residue Glu-287 participates in L-serine binding. 351 to 354 (EISS) is an ATP binding site. Residue Ser-385 participates in L-serine binding.

It belongs to the class-II aminoacyl-tRNA synthetase family. Type-1 seryl-tRNA synthetase subfamily. Homodimer. The tRNA molecule binds across the dimer.

It is found in the cytoplasm. The catalysed reaction is tRNA(Ser) + L-serine + ATP = L-seryl-tRNA(Ser) + AMP + diphosphate + H(+). The enzyme catalyses tRNA(Sec) + L-serine + ATP = L-seryl-tRNA(Sec) + AMP + diphosphate + H(+). The protein operates within aminoacyl-tRNA biosynthesis; selenocysteinyl-tRNA(Sec) biosynthesis; L-seryl-tRNA(Sec) from L-serine and tRNA(Sec): step 1/1. In terms of biological role, catalyzes the attachment of serine to tRNA(Ser). Is also able to aminoacylate tRNA(Sec) with serine, to form the misacylated tRNA L-seryl-tRNA(Sec), which will be further converted into selenocysteinyl-tRNA(Sec). The chain is Serine--tRNA ligase from Synechococcus sp. (strain CC9311).